A 229-amino-acid polypeptide reads, in one-letter code: Potassium/proton antiporter CemA (229 aa).

A run of 3 helical transmembrane segments spans residues 6–26, 114–134, and 189–209; these read AFIP…ISLS, ILCF…LLII, and IISG…KYWI.

It belongs to the CemA family.

It is found in the plastid. The protein resides in the chloroplast inner membrane. The catalysed reaction is K(+)(in) + H(+)(out) = K(+)(out) + H(+)(in). Its function is as follows. Contributes to K(+)/H(+) antiport activity by supporting proton efflux to control proton extrusion and homeostasis in chloroplasts in a light-dependent manner to modulate photosynthesis. Prevents excessive induction of non-photochemical quenching (NPQ) under continuous-light conditions. Indirectly promotes efficient inorganic carbon uptake into chloroplasts. The chain is Potassium/proton antiporter CemA from Carica papaya (Papaya).